Here is a 686-residue protein sequence, read N- to C-terminus: Asparagine-rich protein (686 aa).

An N-terminal signal peptide occupies residues 1–18 (MKGTSALLLIGFFHATIS). Disordered regions lie at residues 34–73 (KRGNLNTGGQITSNSAILGDVNAGSKLSEPPKRRNTDKTA), 125–148 (SLTSDTKTTTRTSQTSSTRASSSI), and 201–236 (ITRQKSENTQGNSIVRNGGTNSLNIPSSTRRSQPPN). The span at 37-49 (NLNTGGQITSNSA) shows a compositional bias: polar residues. The segment covering 62–73 (EPPKRRNTDKTA) has biased composition (basic and acidic residues).

In terms of tissue distribution, prismatic layer of shell (at protein level). Expressed primarily in the mantle with highest level in the mantle edge and lower level in the mantle pallium.

It localises to the secreted. This is Asparagine-rich protein from Margaritifera margaritifera (Freshwater pearl mussel).